The following is a 917-amino-acid chain: Gamma-tubulin complex component 3 (917 aa).

This sequence belongs to the TUBGCP family. Gamma-tubulin small complex (Gamma TuSC) is a heterotetrameric complex which contains two molecules of gamma-tubulin, and one molecule each of Dgrip84 and Dgrip91. The gamma-tubulin in this complex binds preferentially to GDP over GTP.

It is found in the cytoplasm. The protein resides in the cytoskeleton. Its subcellular location is the microtubule organizing center. It localises to the centrosome. The protein localises to the perinuclear region. This Drosophila melanogaster (Fruit fly) protein is Gamma-tubulin complex component 3.